The following is a 141-amino-acid chain: Large ribosomal subunit protein bL17 (141 aa).

It belongs to the bacterial ribosomal protein bL17 family. Part of the 50S ribosomal subunit. Contacts protein L32.

This chain is Large ribosomal subunit protein bL17, found in Allorhizobium ampelinum (strain ATCC BAA-846 / DSM 112012 / S4) (Agrobacterium vitis (strain S4)).